The primary structure comprises 59 residues: Kunitz-type serine protease inhibitor dendrotoxin E (59 aa).

Residues 7-57 (CKLPAEPGPCKASIPAFYYNWAAKKCQLFHYGGCKGNANRFSTIEKCRHAC) form the BPTI/Kunitz inhibitor domain. 3 disulfides stabilise this stretch: cysteine 7-cysteine 57, cysteine 16-cysteine 40, and cysteine 32-cysteine 53.

This sequence belongs to the venom Kunitz-type family. In terms of tissue distribution, expressed by the venom gland.

The protein resides in the secreted. Serine protease inhibitor that inhibits trypsin. May also inhibit voltage-gated potassium channels (Kv). Binds transition metal ions such as copper and cobalt. The protein is Kunitz-type serine protease inhibitor dendrotoxin E of Dendroaspis polylepis polylepis (Black mamba).